We begin with the raw amino-acid sequence, 50 residues long: C-C motif chemokine 5 (50 aa).

This sequence belongs to the intercrine beta (chemokine CC) family.

It is found in the secreted. Its function is as follows. Chemoattractant for blood monocytes, memory T-helper cells and eosinophils. Causes the release of histamine from basophils and activates eosinophils. May activate several chemokine receptors including CCR1, CCR3, CCR4 and CCR5. May also be an agonist of the G protein-coupled receptor GPR75. Together with GPR75, may play a role in neuron survival through activation of a downstream signaling pathway involving the PI3, Akt and MAP kinases. By activating GPR75 may also play a role in insulin secretion by islet cells. This is C-C motif chemokine 5 (CCL5) from Sus scrofa (Pig).